The chain runs to 332 residues: Lipoyl synthase (332 aa).

Residues Cys-74, Cys-79, Cys-85, Cys-100, Cys-104, Cys-107, and Ser-314 each contribute to the [4Fe-4S] cluster site. Residues 85–303 enclose the Radical SAM core domain; sequence CFGKGTATFM…EEKAYEMGFS (219 aa).

The protein belongs to the radical SAM superfamily. Lipoyl synthase family. [4Fe-4S] cluster is required as a cofactor.

It localises to the cytoplasm. The catalysed reaction is [[Fe-S] cluster scaffold protein carrying a second [4Fe-4S](2+) cluster] + N(6)-octanoyl-L-lysyl-[protein] + 2 oxidized [2Fe-2S]-[ferredoxin] + 2 S-adenosyl-L-methionine + 4 H(+) = [[Fe-S] cluster scaffold protein] + N(6)-[(R)-dihydrolipoyl]-L-lysyl-[protein] + 4 Fe(3+) + 2 hydrogen sulfide + 2 5'-deoxyadenosine + 2 L-methionine + 2 reduced [2Fe-2S]-[ferredoxin]. The protein operates within protein modification; protein lipoylation via endogenous pathway; protein N(6)-(lipoyl)lysine from octanoyl-[acyl-carrier-protein]: step 2/2. Catalyzes the radical-mediated insertion of two sulfur atoms into the C-6 and C-8 positions of the octanoyl moiety bound to the lipoyl domains of lipoate-dependent enzymes, thereby converting the octanoylated domains into lipoylated derivatives. The protein is Lipoyl synthase of Polaromonas naphthalenivorans (strain CJ2).